Consider the following 92-residue polypeptide: Long neurotoxin 2 (92 aa).

The N-terminal stretch at 1–21 (MKTLLLTLVVVTIVCLDLGYT) is a signal peptide. 5 disulfide bridges follow: C24/C42, C35/C63, C48/C52, C67/C79, and C80/C85.

The protein belongs to the three-finger toxin family. Long-chain subfamily. Type II alpha-neurotoxin sub-subfamily. As to expression, expressed by the venom gland.

It is found in the secreted. Its function is as follows. Binds with high affinity to muscular (alpha-1/CHRNA1) and neuronal (alpha-7/CHRNA7) nicotinic acetylcholine receptor (nAChR) and inhibits acetylcholine from binding to the receptor, thereby impairing neuromuscular and neuronal transmission. In Oxyuranus microlepidotus (Inland taipan), this protein is Long neurotoxin 2.